Here is a 261-residue protein sequence, read N- to C-terminus: Phosphate import ATP-binding protein PstB (261 aa).

In terms of domain architecture, ABC transporter spans L15–I256. Position 47 to 54 (G47 to S54) interacts with ATP.

This sequence belongs to the ABC transporter superfamily. Phosphate importer (TC 3.A.1.7) family. As to quaternary structure, the complex is composed of two ATP-binding proteins (PstB), two transmembrane proteins (PstC and PstA) and a solute-binding protein (PstS).

It is found in the cell inner membrane. It carries out the reaction phosphate(out) + ATP + H2O = ADP + 2 phosphate(in) + H(+). Functionally, part of the ABC transporter complex PstSACB involved in phosphate import. Responsible for energy coupling to the transport system. The chain is Phosphate import ATP-binding protein PstB from Burkholderia sp.